The chain runs to 669 residues: Trissin receptor (669 aa).

Residues 1 to 15 (MIMTMMQTVRAWQQE) show a composition bias toward polar residues. The disordered stretch occupies residues 1–90 (MIMTMMQTVR…PTGQQPPRLP (90 aa)). Over 1–184 (MIMTMMQTVR…EYIFDRTDVR (184 aa)) the chain is Extracellular. Residues 55-74 (NQNNGSPNSSPNQSTSAFRQ) are compositionally biased toward low complexity. An N-linked (GlcNAc...) asparagine glycan is attached at Asn-66. Over residues 79–89 (HPPTGQQPPRL) the composition is skewed to pro residues. Asn-120 and Asn-130 each carry an N-linked (GlcNAc...) asparagine glycan. Residues 185–205 (IIFITLYTLVFCCCFFGNLLV) form a helical membrane-spanning segment. Over 206-217 (ILVVTLSRRLRS) the chain is Cytoplasmic. Residues 218–238 (ITNFFLANLAFADFCVGLFCV) traverse the membrane as a helical segment. Over 239–269 (MQNLSIYLIESWVFGEFLCRMYQFVHSLSYT) the chain is Extracellular. Residue Asn-241 is glycosylated (N-linked (GlcNAc...) asparagine). Cys-257 and Cys-340 form a disulfide bridge. The chain crosses the membrane as a helical span at residues 270 to 290 (ASIFILVVICMERYFAIVHPI). Over 291–302 (TCKQILTAARLR) the chain is Cytoplasmic. The helical transmembrane segment at 303–323 (MVIVTVWITSAVYSTPKFVFS) threads the bilayer. Topologically, residues 324–350 (KTIKNIHTQDGQEEEICVLDREMFNSK) are extracellular. The chain crosses the membrane as a helical span at residues 351-371 (LLDMINFVLLYVMPLLVMTVL). At 372–552 (YSKIAIALWR…SSNVLRARRG (181 aa)) the chain is on the cytoplasmic side. The span at 390–401 (VVQHQHQQPQQP) shows a compositional bias: low complexity. 2 disordered regions span residues 390–481 (VVQH…RGVS) and 515–537 (AHHQ…AGAT). A compositionally biased stretch (basic residues) spans 414–429 (MYHHHPHHHHHHHQHH). Positions 441 to 454 (VGVGLGGGGGGGPG) are enriched in gly residues. Low complexity predominate over residues 455–470 (PSLASGGSSTTSLSRK). Residues 524–534 (SVGGGSGGAGA) show a composition bias toward gly residues. The helical transmembrane segment at 553 to 573 (VVRMLIIFVLTFALCNLPYHA) threads the bilayer. At 574–595 (RKMWQYWSRSYRGDSNFNALLT) the chain is on the extracellular side. Residues 596 to 616 (PLTFLVTYFNSGVNPLLYAFL) traverse the membrane as a helical segment. At 617-669 (SRNFRKGMKELLLCSWKKGKGKSSSNSSMHHKRKALQTHSLPTDTTHIGNEQL) the chain is on the cytoplasmic side. A disordered region spans residues 635 to 669 (GKGKSSSNSSMHHKRKALQTHSLPTDTTHIGNEQL). Residues 653-669 (QTHSLPTDTTHIGNEQL) show a composition bias toward polar residues.

Belongs to the G-protein coupled receptor 1 family.

Its subcellular location is the cell membrane. Functionally, G-protein coupled receptor which is activated by the Trissin peptide in vitro, leading to increased intracellular calcium ion levels. The protein is Trissin receptor of Drosophila melanogaster (Fruit fly).